We begin with the raw amino-acid sequence, 398 residues long: Cytochrome b (398 aa).

A helical transmembrane segment spans residues Leu45 to Met65. Heme b is bound by residues His95 and His109. The next 9 membrane-spanning stretches (helical) occupy residues Ala96–Tyr116, Ile129–Trp149, Phe164–Val184, Phe192–Val212, Phe245–Tyr265, Pro277–Leu297, Leu304–Asp324, Met339–Ala359, and Ile366–Gly386. Residues His196 and His210 each coordinate heme b.

The protein belongs to the cytochrome b family. In terms of assembly, the main subunits of complex b-c1 are: cytochrome b, cytochrome c1 and the Rieske protein. Heme b is required as a cofactor.

The protein resides in the cell membrane. Functionally, component of the ubiquinol-cytochrome c reductase complex (complex III or cytochrome b-c1 complex), which is a respiratory chain that generates an electrochemical potential coupled to ATP synthesis. In Rickettsia conorii (strain ATCC VR-613 / Malish 7), this protein is Cytochrome b (petB).